We begin with the raw amino-acid sequence, 443 residues long: Adenylyltransferase and sulfurtransferase UBA4 (443 aa).

ATP-binding positions include G83, D104, 111-115, K128, and 172-173; these read SNLHR and DT. Zn(2+)-binding residues include C214 and C217. C231 serves as the catalytic Glycyl thioester intermediate; for adenylyltransferase activity. Positions 292 and 295 each coordinate Zn(2+). The 99-residue stretch at 343 to 441 folds into the Rhodanese domain; sequence QSKAPVLLDV…WSDIVNPKFP (99 aa). C400 acts as the Cysteine persulfide intermediate; for sulfurtransferase activity in catalysis.

It in the N-terminal section; belongs to the HesA/MoeB/ThiF family. UBA4 subfamily. The cofactor is Zn(2+).

The protein localises to the cytoplasm. It localises to the cytosol. The protein operates within tRNA modification; 5-methoxycarbonylmethyl-2-thiouridine-tRNA biosynthesis. Functionally, plays a central role in 2-thiolation of mcm(5)S(2)U at tRNA wobble positions of cytosolic tRNA(Lys), tRNA(Glu) and tRNA(Gln). Acts by mediating the C-terminal thiocarboxylation of sulfur carrier URM1. Its N-terminus first activates URM1 as acyl-adenylate (-COAMP), then the persulfide sulfur on the catalytic cysteine is transferred to URM1 to form thiocarboxylation (-COSH) of its C-terminus. The reaction probably involves hydrogen sulfide that is generated from the persulfide intermediate and that acts as a nucleophile towards URM1. Subsequently, a transient disulfide bond is formed. Does not use thiosulfate as sulfur donor; NFS1 probably acting as a sulfur donor for thiocarboxylation reactions. Prior mcm(5) tRNA modification by the elongator complex is required for 2-thiolation. May also be involved in protein urmylation. This chain is Adenylyltransferase and sulfurtransferase UBA4, found in Scheffersomyces stipitis (strain ATCC 58785 / CBS 6054 / NBRC 10063 / NRRL Y-11545) (Yeast).